Here is a 411-residue protein sequence, read N- to C-terminus: Ribose-phosphate pyrophosphokinase 3, chloroplastic (411 aa).

The transit peptide at 1–39 (MAAISPANATTAASLSLPQFSSTSSSLSSSSSPSFLNFK) directs the protein to the chloroplast. Mg(2+)-binding residues include D231 and H233. The tract at residues 314–329 (GRHVVIVDDLVQSGGT) is binding of phosphoribosylpyrophosphate.

Belongs to the ribose-phosphate pyrophosphokinase family.

The protein resides in the plastid. It localises to the chloroplast. The catalysed reaction is D-ribose 5-phosphate + ATP = 5-phospho-alpha-D-ribose 1-diphosphate + AMP + H(+). The polypeptide is Ribose-phosphate pyrophosphokinase 3, chloroplastic (PRS3) (Arabidopsis thaliana (Mouse-ear cress)).